A 163-amino-acid polypeptide reads, in one-letter code: Crossover junction endodeoxyribonuclease RuvC (163 aa).

Catalysis depends on residues aspartate 9, glutamate 76, and aspartate 148. 3 residues coordinate Mg(2+): aspartate 9, glutamate 76, and aspartate 148.

It belongs to the RuvC family. As to quaternary structure, homodimer which binds Holliday junction (HJ) DNA. The HJ becomes 2-fold symmetrical on binding to RuvC with unstacked arms; it has a different conformation from HJ DNA in complex with RuvA. In the full resolvosome a probable DNA-RuvA(4)-RuvB(12)-RuvC(2) complex forms which resolves the HJ. The cofactor is Mg(2+).

The protein localises to the cytoplasm. It catalyses the reaction Endonucleolytic cleavage at a junction such as a reciprocal single-stranded crossover between two homologous DNA duplexes (Holliday junction).. The RuvA-RuvB-RuvC complex processes Holliday junction (HJ) DNA during genetic recombination and DNA repair. Endonuclease that resolves HJ intermediates. Cleaves cruciform DNA by making single-stranded nicks across the HJ at symmetrical positions within the homologous arms, yielding a 5'-phosphate and a 3'-hydroxyl group; requires a central core of homology in the junction. The consensus cleavage sequence is 5'-(A/T)TT(C/G)-3'. Cleavage occurs on the 3'-side of the TT dinucleotide at the point of strand exchange. HJ branch migration catalyzed by RuvA-RuvB allows RuvC to scan DNA until it finds its consensus sequence, where it cleaves and resolves the cruciform DNA. The protein is Crossover junction endodeoxyribonuclease RuvC of Trichormus variabilis (strain ATCC 29413 / PCC 7937) (Anabaena variabilis).